The chain runs to 172 residues: Large ribosomal subunit protein uL10 (172 aa).

The protein belongs to the universal ribosomal protein uL10 family. Part of the ribosomal stalk of the 50S ribosomal subunit. The N-terminus interacts with L11 and the large rRNA to form the base of the stalk. The C-terminus forms an elongated spine to which L12 dimers bind in a sequential fashion forming a multimeric L10(L12)X complex.

Its function is as follows. Forms part of the ribosomal stalk, playing a central role in the interaction of the ribosome with GTP-bound translation factors. The polypeptide is Large ribosomal subunit protein uL10 (Clostridium tetani (strain Massachusetts / E88)).